The following is a 302-amino-acid chain: Sulfate adenylyltransferase subunit 2 (302 aa).

A disordered region spans residues 280-302; that stretch reads RQGRLIDSDQSASMEQKKRQGYF.

This sequence belongs to the PAPS reductase family. CysD subfamily. As to quaternary structure, heterodimer composed of CysD, the smaller subunit, and CysN.

It catalyses the reaction sulfate + ATP + H(+) = adenosine 5'-phosphosulfate + diphosphate. It participates in sulfur metabolism; hydrogen sulfide biosynthesis; sulfite from sulfate: step 1/3. Its function is as follows. With CysN forms the ATP sulfurylase (ATPS) that catalyzes the adenylation of sulfate producing adenosine 5'-phosphosulfate (APS) and diphosphate, the first enzymatic step in sulfur assimilation pathway. APS synthesis involves the formation of a high-energy phosphoric-sulfuric acid anhydride bond driven by GTP hydrolysis by CysN coupled to ATP hydrolysis by CysD. This is Sulfate adenylyltransferase subunit 2 from Shewanella oneidensis (strain ATCC 700550 / JCM 31522 / CIP 106686 / LMG 19005 / NCIMB 14063 / MR-1).